The sequence spans 450 residues: Glucose-6-phosphate isomerase (450 aa).

Glu-290 acts as the Proton donor in catalysis. Catalysis depends on residues His-311 and Lys-425.

The protein belongs to the GPI family.

It is found in the cytoplasm. The enzyme catalyses alpha-D-glucose 6-phosphate = beta-D-fructose 6-phosphate. It functions in the pathway carbohydrate biosynthesis; gluconeogenesis. It participates in carbohydrate degradation; glycolysis; D-glyceraldehyde 3-phosphate and glycerone phosphate from D-glucose: step 2/4. Functionally, catalyzes the reversible isomerization of glucose-6-phosphate to fructose-6-phosphate. In Listeria monocytogenes serovar 1/2a (strain ATCC BAA-679 / EGD-e), this protein is Glucose-6-phosphate isomerase.